A 122-amino-acid polypeptide reads, in one-letter code: Large ribosomal subunit protein uL14c (122 aa).

Belongs to the universal ribosomal protein uL14 family. Part of the 50S ribosomal subunit.

It localises to the plastid. The protein resides in the chloroplast. Binds to 23S rRNA. In Nicotiana tomentosiformis (Tobacco), this protein is Large ribosomal subunit protein uL14c.